A 179-amino-acid polypeptide reads, in one-letter code: Replicase large subunit (179 aa).

Belongs to the ssRNA positive-strand viruses RNA-directed RNA polymerase family.

It catalyses the reaction RNA(n) + a ribonucleoside 5'-triphosphate = RNA(n+1) + diphosphate. The enzyme catalyses ATP + H2O = ADP + phosphate + H(+). In terms of biological role, replicase large subunit: is an RNA-dependent RNA polymerase active in viral RNA replication. This Tobacco rattle virus (strain PSG) protein is Replicase large subunit.